A 647-amino-acid polypeptide reads, in one-letter code: Protein FAM161A (647 aa).

Disordered stretches follow at residues 32 to 55 (RELG…TSME) and 143 to 175 (PAQH…GDSE). Polar residues predominate over residues 152-161 (SRSVSPSLAE). Coiled coils occupy residues 243–268 (IKSK…ECQK) and 518–544 (AIRK…VLNK). 2 disordered regions span residues 504–524 (QTPR…KREK) and 588–647 (DEHV…IEEI). Composition is skewed to basic and acidic residues over residues 510-524 (ESSK…KREK) and 588-600 (DEHV…KKIP). Acidic residues predominate over residues 613 to 638 (DLLDDEEDDKYDCESEEAEEEDAYST).

It belongs to the FAM161 family.

Its subcellular location is the cytoplasm. It is found in the cytoskeleton. The protein resides in the cilium basal body. The protein localises to the cell projection. It localises to the cilium. Its subcellular location is the microtubule organizing center. It is found in the centrosome. The protein resides in the centriole. Functionally, involved in ciliogenesis. The protein is Protein FAM161A (fam161a) of Xenopus laevis (African clawed frog).